The chain runs to 213 residues: Holliday junction branch migration complex subunit RuvA (213 aa).

The domain I stretch occupies residues 1 to 63 (MISFLRGTVA…EDSMTLFGFA (63 aa)). A domain II region spans residues 64–140 (DDDEREVFEV…LVPHGTAPAA (77 aa)). Positions 140–144 (AATTA) are flexible linker. Residues 145–213 (AEASWKPQVV…RAGNRVGSRG (69 aa)) are domain III.

Belongs to the RuvA family. In terms of assembly, homotetramer. Forms an RuvA(8)-RuvB(12)-Holliday junction (HJ) complex. HJ DNA is sandwiched between 2 RuvA tetramers; dsDNA enters through RuvA and exits via RuvB. An RuvB hexamer assembles on each DNA strand where it exits the tetramer. Each RuvB hexamer is contacted by two RuvA subunits (via domain III) on 2 adjacent RuvB subunits; this complex drives branch migration. In the full resolvosome a probable DNA-RuvA(4)-RuvB(12)-RuvC(2) complex forms which resolves the HJ.

The protein resides in the cytoplasm. Its function is as follows. The RuvA-RuvB-RuvC complex processes Holliday junction (HJ) DNA during genetic recombination and DNA repair, while the RuvA-RuvB complex plays an important role in the rescue of blocked DNA replication forks via replication fork reversal (RFR). RuvA specifically binds to HJ cruciform DNA, conferring on it an open structure. The RuvB hexamer acts as an ATP-dependent pump, pulling dsDNA into and through the RuvAB complex. HJ branch migration allows RuvC to scan DNA until it finds its consensus sequence, where it cleaves and resolves the cruciform DNA. The sequence is that of Holliday junction branch migration complex subunit RuvA from Pseudarthrobacter chlorophenolicus (strain ATCC 700700 / DSM 12829 / CIP 107037 / JCM 12360 / KCTC 9906 / NCIMB 13794 / A6) (Arthrobacter chlorophenolicus).